The chain runs to 260 residues: 3'-5' ssDNA/RNA exonuclease TatD (260 aa).

Positions 91, 127, and 152 each coordinate a divalent metal cation.

The protein belongs to the metallo-dependent hydrolases superfamily. TatD-type hydrolase family. TatD subfamily. Monomer. Mg(2+) is required as a cofactor.

The protein resides in the cytoplasm. Functionally, 3'-5' exonuclease that prefers single-stranded DNA and RNA. May play a role in the H(2)O(2)-induced DNA damage repair. This chain is 3'-5' ssDNA/RNA exonuclease TatD, found in Escherichia fergusonii (strain ATCC 35469 / DSM 13698 / CCUG 18766 / IAM 14443 / JCM 21226 / LMG 7866 / NBRC 102419 / NCTC 12128 / CDC 0568-73).